Here is a 316-residue protein sequence, read N- to C-terminus: 4-hydroxy-3-methylbut-2-enyl diphosphate reductase (316 aa).

Cys-12 contributes to the [4Fe-4S] cluster binding site. Residues His-41 and His-74 each coordinate (2E)-4-hydroxy-3-methylbut-2-enyl diphosphate. Dimethylallyl diphosphate-binding residues include His-41 and His-74. Isopentenyl diphosphate is bound by residues His-41 and His-74. Cys-96 lines the [4Fe-4S] cluster pocket. Position 124 (His-124) interacts with (2E)-4-hydroxy-3-methylbut-2-enyl diphosphate. Dimethylallyl diphosphate is bound at residue His-124. His-124 lines the isopentenyl diphosphate pocket. The active-site Proton donor is Glu-126. Residue Thr-167 coordinates (2E)-4-hydroxy-3-methylbut-2-enyl diphosphate. Residue Cys-197 coordinates [4Fe-4S] cluster. (2E)-4-hydroxy-3-methylbut-2-enyl diphosphate-binding residues include Ser-225, Ser-226, Asn-227, and Ser-269. Positions 225, 226, 227, and 269 each coordinate dimethylallyl diphosphate. The isopentenyl diphosphate site is built by Ser-225, Ser-226, Asn-227, and Ser-269.

This sequence belongs to the IspH family. As to quaternary structure, homodimer. [4Fe-4S] cluster serves as cofactor.

It carries out the reaction isopentenyl diphosphate + 2 oxidized [2Fe-2S]-[ferredoxin] + H2O = (2E)-4-hydroxy-3-methylbut-2-enyl diphosphate + 2 reduced [2Fe-2S]-[ferredoxin] + 2 H(+). The catalysed reaction is dimethylallyl diphosphate + 2 oxidized [2Fe-2S]-[ferredoxin] + H2O = (2E)-4-hydroxy-3-methylbut-2-enyl diphosphate + 2 reduced [2Fe-2S]-[ferredoxin] + 2 H(+). It functions in the pathway isoprenoid biosynthesis; dimethylallyl diphosphate biosynthesis; dimethylallyl diphosphate from (2E)-4-hydroxy-3-methylbutenyl diphosphate: step 1/1. It participates in isoprenoid biosynthesis; isopentenyl diphosphate biosynthesis via DXP pathway; isopentenyl diphosphate from 1-deoxy-D-xylulose 5-phosphate: step 6/6. Its function is as follows. Catalyzes the conversion of 1-hydroxy-2-methyl-2-(E)-butenyl 4-diphosphate (HMBPP) into a mixture of isopentenyl diphosphate (IPP) and dimethylallyl diphosphate (DMAPP). Acts in the terminal step of the DOXP/MEP pathway for isoprenoid precursor biosynthesis. The sequence is that of 4-hydroxy-3-methylbut-2-enyl diphosphate reductase from Shigella flexneri serotype 5b (strain 8401).